Here is a 138-residue protein sequence, read N- to C-terminus: Basic phospholipase A2 canebraxin B (138 aa).

The N-terminal stretch at 1-16 is a signal peptide; the sequence is MRALWIVAVLLVAVEG. 7 disulfides stabilise this stretch: Cys-42–Cys-131, Cys-44–Cys-60, Cys-59–Cys-111, Cys-65–Cys-138, Cys-66–Cys-104, Cys-73–Cys-97, and Cys-91–Cys-102. Ca(2+) is bound by residues Tyr-43, Gly-45, and Gly-47. The active site involves His-63. Asp-64 provides a ligand contact to Ca(2+). The active site involves Asp-105.

The protein belongs to the phospholipase A2 family. Group II subfamily. In terms of assembly, heterodimer of an acidic subunit and a basic chain. The acidic subunit is non-toxic, without enzymatic activity and comprises 3 peptides that are cross-linked by 7 disulfide bridges. The basic subunit is toxic, has phospholipase A2 activity and is composed of a single chain. Ca(2+) serves as cofactor. In terms of tissue distribution, expressed by the venom gland.

Its subcellular location is the secreted. It catalyses the reaction a 1,2-diacyl-sn-glycero-3-phosphocholine + H2O = a 1-acyl-sn-glycero-3-phosphocholine + a fatty acid + H(+). Its function is as follows. Snake venom phospholipase A2 (PLA2) that shows presynaptic neurotoxicity. PLA2 catalyzes the calcium-dependent hydrolysis of the 2-acyl groups in 3-sn-phosphoglycerides. The protein is Basic phospholipase A2 canebraxin B of Crotalus horridus (Timber rattlesnake).